The primary structure comprises 258 residues: UPF0246 protein MS0374 (258 aa).

The protein belongs to the UPF0246 family.

This is UPF0246 protein MS0374 from Mannheimia succiniciproducens (strain KCTC 0769BP / MBEL55E).